A 365-amino-acid chain; its full sequence is Anhydro-N-acetylmuramic acid kinase (365 aa).

Residue 9-16 coordinates ATP; that stretch reads GTSLDGVD.

It belongs to the anhydro-N-acetylmuramic acid kinase family.

The enzyme catalyses 1,6-anhydro-N-acetyl-beta-muramate + ATP + H2O = N-acetyl-D-muramate 6-phosphate + ADP + H(+). Its pathway is amino-sugar metabolism; 1,6-anhydro-N-acetylmuramate degradation. It participates in cell wall biogenesis; peptidoglycan recycling. Its function is as follows. Catalyzes the specific phosphorylation of 1,6-anhydro-N-acetylmuramic acid (anhMurNAc) with the simultaneous cleavage of the 1,6-anhydro ring, generating MurNAc-6-P. Is required for the utilization of anhMurNAc either imported from the medium or derived from its own cell wall murein, and thus plays a role in cell wall recycling. This chain is Anhydro-N-acetylmuramic acid kinase, found in Rhodopseudomonas palustris (strain BisB18).